A 1079-amino-acid chain; its full sequence is Extracellular calcium-sensing receptor (1079 aa).

An N-terminal signal peptide occupies residues 1 to 19 (MAFSSCCWILLALTWCTSA). The Extracellular portion of the chain corresponds to 20-610 (YGPDQRAQKK…KEIEFLSWTE (591 aa)). Positions 22–188 (PDQRAQKKGD…QFKSFLRTIP (167 aa)) are ligand-binding 1 (LB1). Cys60 and Cys101 are joined by a disulfide. 66-70 (RGFRW) is a binding site for phosphate. Positions 81, 84, 87, and 88 each coordinate Ca(2+). A glycan (N-linked (GlcNAc...) asparagine) is linked at Asn90. Residue Thr100 participates in Ca(2+) binding. Asn130 carries an N-linked (GlcNAc...) asparagine glycan. Thr145 is a binding site for Ca(2+). 3 residues coordinate L-tryptophan: Ser147, Ala168, and Ser170. Ca(2+) is bound by residues Ser170, Pro188, Asp190, Glu231, and Asp234. Residues 189 to 324 (NDEHQATAMA…GGTIGFALKA (136 aa)) form a ligand-binding 2 (LB2) region. Intrachain disulfides connect Cys236-Cys561, Cys358-Cys395, Cys437-Cys449, Cys542-Cys562, Cys546-Cys565, Cys568-Cys582, and Cys585-Cys598. Spermine-binding residues include Asp238 and Ser240. N-linked (GlcNAc...) asparagine glycans are attached at residues Asn261 and Asn287. Residue Glu297 coordinates Ca(2+). Glu297 is a binding site for L-tryptophan. 2 N-linked (GlcNAc...) asparagine glycosylation sites follow: Asn386 and Asn400. Residue 415 to 417 (RIS) participates in phosphate binding. Residues Asn446, Asn468, and Asn488 are each glycosylated (N-linked (GlcNAc...) asparagine). Residue Tyr489 coordinates Ca(2+). Asn541 carries an N-linked (GlcNAc...) asparagine glycan. A cysteine-rich (CR) region spans residues 542-612 (CSRDCLAGTR…IEFLSWTEPF (71 aa)). Position 557 (Gly557) interacts with Ca(2+). A glycan (N-linked (GlcNAc...) asparagine) is linked at Asn594. The helical transmembrane segment at 611 to 636 (PFGIALTLFAVLGIFLTAFVLGVFIK) threads the bilayer. The Cytoplasmic portion of the chain corresponds to 637-648 (FRNTPIVKATNR). Positions 637–648 (FRNTPIVKATNR) are intracellular loop 1 (ICL1). Residues 649–668 (ELSYLLLFSLLCCFSSSLFF) traverse the membrane as a helical segment. Residues 669-674 (IGEPQD) lie on the Extracellular side of the membrane. Residues 675-698 (WTCRLRQPAFGISFVLCISCILVK) traverse the membrane as a helical segment. Residues 699–722 (TNRVLLVFEAKIPTSFHRKWWGLN) are Cytoplasmic-facing. Residues 699 to 722 (TNRVLLVFEAKIPTSFHRKWWGLN) are intracellular loop 2 (ICL2). A helical transmembrane segment spans residues 723 to 745 (LQFLLVFLCTFMQIVICAIWLYT). Topologically, residues 746-769 (APPSSYRNHELEDEIIFITCHEGS) are extracellular. Residues 770 to 789 (LMALGFLIGYTCLLAAICFF) traverse the membrane as a helical segment. At 790–805 (FAFKSRKLPENFNEAK) the chain is on the cytoplasmic side. Positions 790–805 (FAFKSRKLPENFNEAK) are intracellular loop 3 (ICL3). Residues 806–828 (FITFSMLIFFIVWISFIPAYAST) form a helical membrane-spanning segment. At 829–832 (YGKF) the chain is on the extracellular side. The chain crosses the membrane as a helical span at residues 833–854 (VSAVEVIAILAASFGLLACIFF). The Cytoplasmic segment spans residues 855–1079 (NKVYIILFKP…STVTENMLHS (225 aa)). The C-terminus stretch occupies residues 855–1079 (NKVYIILFKP…STVTENMLHS (225 aa)). Residues 880 to 900 (AFKVAARATLRRSNVSRQRSS) form an interaction with RNF19A region. Phosphothreonine is present on Thr888. Positions 890–898 (RRSNVSRQR) are arginine-rich retention motif. Ser892, Ser899, and Ser920 each carry phosphoserine. Residues 892–918 (SNVSRQRSSSLGGSTGSTPSSSISSKS) are compositionally biased toward low complexity. The disordered stretch occupies residues 892 to 963 (SNVSRQRSSS…QPQLQQQPRC (72 aa)). Residues 945 to 954 (PQAPSTPQPQ) are compositionally biased toward pro residues. Position 1062 is a phosphoserine (Ser1062).

This sequence belongs to the G-protein coupled receptor 3 family. As to quaternary structure, homodimer; disulfide-linked. Interacts with VCP. Interacts with ARRB1. In terms of processing, phosphorylation at Thr-888 by PKC impairs coupling with G(q)/G(11) G-proteins, while it does not affect G(i)/G(o)-coupling. Phosphorylation at Ser-892 by PKC and Ser-899 by PKA promote plasma membrane localization. Ubiquitinated by RNF19A; which induces proteasomal degradation.

The protein resides in the cell membrane. In resting state, adopts an open conformation, anion-binding promoting the inactive configuration. Upon aromatic amino acid-binding, the groove in the extracellular venus flytrap module is closed, thereby inducing the formation of a novel homodimer interface between subunits. Calcium ions stabilize the active state by enhancing homodimer interactions between membrane-proximal domains to fully activate the receptor. Upon activation, the homodimer adopts an asymmetric configuration of the 7-transmembrane region that primes one protomer for G-protein coupling. G-protein binding expands the transmembrane dimer interface; the restriction imposed by the receptor dimer, in combination with intracellular loop 2 (ICL2), enables G-protein activation by facilitating conformational transition of G-protein alpha. Coupling to different classes of G-proteins results in distinct CASR-G-protein interfaces. In contrast to human protein, not activated by AMG 416, a D-amino acid-containing peptide agonist: this is probably due to the absence of a Cys residue at position 482, which forms a disulfide bond with the AMG 416 peptide agonist in human and that is replaced by a Tyr residue in pig. Functionally, G-protein-coupled receptor that senses changes in the extracellular concentration of calcium ions and plays a key role in maintaining calcium homeostasis. Senses fluctuations in the circulating calcium concentration: activated by elevated circulating calcium, leading to decreased parathyroid hormone (PTH) secretion in parathyroid glands. In kidneys, acts as a key regulator of renal tubular calcium resorption. Ligand binding causes a conformation change that triggers signaling via guanine nucleotide-binding proteins (G-proteins) and modulates the activity of downstream effectors. CASR is coupled with different G(q)/G(11), G(i)/G(o)- or G(s)-classes of G-proteins depending on the context. In the parathyroid and kidney, CASR signals through G(q)/G(11) and G(i)/G(o) G-proteins: G(q)/G(11) coupling activates phospholipase C-beta, releasing diacylglycerol (DAG) and inositol 1,4,5-trisphosphate (IP3) second messengers, while G(i)/G(o) coupling mediates inhibition of adenylate cyclase activity. The G-protein-coupled receptor activity is activated by a co-agonist mechanism: aromatic amino acids, such as Trp or Phe, act concertedly with divalent cations, such as calcium or magnesium, to achieve full receptor activation. Acts as an activator of the NLRP3 inflammasome via G(i)/G(o)-mediated signaling: down-regulation of cyclic AMP (cAMP) relieving NLRP3 inhibition by cAMP. Acts as a regulator of proton-sensing receptor GPR68 in a seesaw manner: CASR-mediated signaling inhibits GPR68 signaling in response to extracellular calcium, while GPR68 inhibits CASR in presence of extracellular protons. In Sus scrofa (Pig), this protein is Extracellular calcium-sensing receptor (CASR).